Here is a 319-residue protein sequence, read N- to C-terminus: Acetyl esterase (319 aa).

The Involved in the stabilization of the negatively charged intermediate by the formation of the oxyanion hole motif lies at 91–93; the sequence is HGG. Catalysis depends on residues S165, D262, and H292.

Belongs to the 'GDXG' lipolytic enzyme family. In terms of assembly, homodimer. Interacts with MalT and MelA.

It localises to the cytoplasm. In terms of biological role, displays esterase activity towards short chain fatty esters (acyl chain length of up to 8 carbons). Able to hydrolyze triacetylglycerol (triacetin) and tributyrylglycerol (tributyrin), but not trioleylglycerol (triolein) or cholesterol oleate. Negatively regulates MalT activity by antagonizing maltotriose binding. Inhibits MelA galactosidase activity. In Escherichia coli O157:H7, this protein is Acetyl esterase.